We begin with the raw amino-acid sequence, 262 residues long: L-aspartate dehydrogenase (262 aa).

Residues Ala128 and Asn183 each contribute to the NAD(+) site. The active site involves His213.

Belongs to the L-aspartate dehydrogenase family.

The catalysed reaction is L-aspartate + NADP(+) + H2O = oxaloacetate + NH4(+) + NADPH + H(+). It catalyses the reaction L-aspartate + NAD(+) + H2O = oxaloacetate + NH4(+) + NADH + H(+). Its pathway is cofactor biosynthesis; NAD(+) biosynthesis; iminoaspartate from L-aspartate (dehydrogenase route): step 1/1. Functionally, specifically catalyzes the NAD or NADP-dependent dehydrogenation of L-aspartate to iminoaspartate. This is L-aspartate dehydrogenase from Methanopyrus kandleri (strain AV19 / DSM 6324 / JCM 9639 / NBRC 100938).